The following is a 178-amino-acid chain: Transcription termination/antitermination protein NusG (178 aa).

The 30-residue stretch at 130–159 folds into the KOW domain; it reads SVKVKEGPFANFIGTIEEIQLDKRKLKVHV.

Belongs to the NusG family.

Participates in transcription elongation, termination and antitermination. In Halalkalibacterium halodurans (strain ATCC BAA-125 / DSM 18197 / FERM 7344 / JCM 9153 / C-125) (Bacillus halodurans), this protein is Transcription termination/antitermination protein NusG.